A 265-amino-acid polypeptide reads, in one-letter code: Apolipoprotein A-I (265 aa).

The signal sequence occupies residues 1–18 (MKALVLTLAVLFFTGSQA). 2 repeat units span residues 67–88 (LKLL…EQLG) and 89–110 (PVTQ…QEMN). The tract at residues 67–265 (LKLLDNWDSL…DEASKKLNAQ (199 aa)) is 10 X approximate tandem repeats. At methionine 109 the chain carries Methionine sulfoxide. The 3; half-length repeat unit spans residues 111–121 (KDLEEVKQKVQ). Repeat copies occupy residues 122–142 (PYLD…RQKV), 144–165 (PLGE…DKLT), 166–187 (PLAE…QQLA), 188–209 (PYSD…EGGG), and 210–230 (SLAE…EKAK). Residues 231–241 (PALEDLRQGLL) form a 9; half-length repeat. Repeat unit 10 spans residues 242–265 (PVLESLKVSILAAIDEASKKLNAQ).

The protein belongs to the apolipoprotein A1/A4/E family. In terms of assembly, homodimer. Interacts with APOA1BP and CLU. Component of a sperm activating protein complex (SPAP), consisting of APOA1, an immunoglobulin heavy chain, an immunoglobulin light chain and albumin. Interacts with NDRG1. Interacts with SCGB3A2. Interacts with NAXE and YJEFN3. Post-translationally, glycosylated. In terms of processing, palmitoylated. Phosphorylation sites are present in the extracellular medium. As to expression, major protein of plasma HDL, also found in chylomicrons.

The protein resides in the secreted. Participates in the reverse transport of cholesterol from tissues to the liver for excretion by promoting cholesterol efflux from tissues and by acting as a cofactor for the lecithin cholesterol acyltransferase (LCAT). As part of the SPAP complex, activates spermatozoa motility. The chain is Apolipoprotein A-I (APOA1) from Physeter macrocephalus (Sperm whale).